A 190-amino-acid polypeptide reads, in one-letter code: dCTP deaminase (190 aa).

113 to 118 serves as a coordination point for dCTP; the sequence is KSTYAR. E139 serves as the catalytic Proton donor/acceptor. Residues Q158, Y172, K181, and Q182 each contribute to the dCTP site.

It belongs to the dCTP deaminase family. Homotrimer.

It catalyses the reaction dCTP + H2O + H(+) = dUTP + NH4(+). Its pathway is pyrimidine metabolism; dUMP biosynthesis; dUMP from dCTP (dUTP route): step 1/2. Its function is as follows. Catalyzes the deamination of dCTP to dUTP. The sequence is that of dCTP deaminase from Chlamydia abortus (strain DSM 27085 / S26/3) (Chlamydophila abortus).